A 334-amino-acid chain; its full sequence is NAD-dependent protein deacetylase sirtuin-3 (334 aa).

The Deacetylase sirtuin-type domain maps to 53-315; the sequence is SSEKKFSLQD…ERLVDLLGWT (263 aa). An N6-succinyllysine modification is found at lysine 57. NAD(+) is bound by residues 80-100 and 163-166; these read GAGI…SGLY and QNID. The active-site Proton acceptor is the histidine 183. The Zn(2+) site is built by cysteine 191, cysteine 194, cysteine 215, and cysteine 218. NAD(+) is bound by residues 254 to 256 and 279 to 281; these read GTS and NRD.

It belongs to the sirtuin family. Class I subfamily. In terms of assembly, upon metabolic stress, forms a complex composed of FOXO3, SIRT3 and mitochondrial RNA polymerase POLRMT; the complex is recruited to mtDNA in a SIRT3-dependent manner. Also forms a complex composed of FOXO3, SIRT3, TFAM and POLRMT. Interacts with NDUFA9, ACSS1, IDH2 and GDH. Interacts with PCCA. Zn(2+) serves as cofactor. As to expression, expressed in cardiomyocytes (at protein level). Expressed in the brain, liver, kidney and testes. Expressed in skeletal muscles (at protein level).

Its subcellular location is the mitochondrion matrix. The protein resides in the cytoplasm. The enzyme catalyses N(6)-acetyl-L-lysyl-[protein] + NAD(+) + H2O = 2''-O-acetyl-ADP-D-ribose + nicotinamide + L-lysyl-[protein]. It catalyses the reaction N(6)-[(S)-lactoyl]-L-lysyl-[protein] + NAD(+) + H2O = 2''-O-(S)-lactoyl-ADP-D-ribose + nicotinamide + L-lysyl-[protein]. In terms of biological role, NAD-dependent protein deacetylase. Activates or deactivates mitochondrial target proteins by deacetylating key lysine residues. Known targets include ACSS1, IDH, GDH, PDHA1, SOD2, LCAD, SDHA, MRPL12 and the ATP synthase subunit ATP5PO. Contributes to the regulation of the cellular energy metabolism. Important for regulating tissue-specific ATP levels. In response to metabolic stress, deacetylates transcription factor FOXO3 and recruits FOXO3 and mitochondrial RNA polymerase POLRMT to mtDNA to promote mtDNA transcription. Acts as a regulator of ceramide metabolism by mediating deacetylation of ceramide synthases CERS1, CERS2 and CERS6, thereby increasing their activity and promoting mitochondrial ceramide accumulation. Regulates hepatic lipogenesis. Uses NAD(+) substrate imported by SLC25A47, triggering downstream activation of PRKAA1/AMPK-alpha signaling cascade that ultimately downregulates sterol regulatory element-binding protein (SREBP) transcriptional activities and ATP-consuming lipogenesis to restore cellular energy balance. In addition to protein deacetylase activity, also acts as a protein-lysine deacylase by mediating delactylation of proteins, such as CCNE2 and 'Lys-16' of histone H4 (H4K16la). The sequence is that of NAD-dependent protein deacetylase sirtuin-3 from Mus musculus (Mouse).